A 427-amino-acid chain; its full sequence is MESLTLQPISKIDGQINLPGSKSVSNRALLLAALASGKTTLTNLLDSDDIRHMLNALKALGVDYKLSEDKTVCEVNGLGQAFKSTTEALELFLGNAGTAMRPLAAALCLGEGEFILTGEPRMKERPIGHLVTALKAAGADVEYLENENYPPLKIKGTGLKGGNVDIDGSISSQFLTAFLMAAPLSSQETTINIVGDLVSKPYIDITLDIMATFGVVIENKEYKTFVVPANQSYIAPGEFLVEGDASSASYFLAAAAIKGGSVKVTGIGKKSIQGDVQFADALAAMGAEIEWGDDYVIAHKGELNAIDMDFNHIPDAAMTIATTALFAKGTTSIRNVYNWRVKETDRLAAMATELRKVGAEVEEGEDYITITPPAMLRHATIDTYDDHRMAMCFSLVALSDTPVTINDPGCTSKTFPDYFDKLKELSV.

Lys-22, Ser-23, and Arg-27 together coordinate 3-phosphoshikimate. Lys-22 serves as a coordination point for phosphoenolpyruvate. 2 residues coordinate phosphoenolpyruvate: Gly-97 and Arg-125. 7 residues coordinate 3-phosphoshikimate: Ser-171, Ser-172, Gln-173, Ser-199, Asp-315, Asn-338, and Lys-342. Position 173 (Gln-173) interacts with phosphoenolpyruvate. Asp-315 (proton acceptor) is an active-site residue. Positions 346, 388, and 413 each coordinate phosphoenolpyruvate.

The protein belongs to the EPSP synthase family. In terms of assembly, monomer.

It localises to the cytoplasm. The catalysed reaction is 3-phosphoshikimate + phosphoenolpyruvate = 5-O-(1-carboxyvinyl)-3-phosphoshikimate + phosphate. It functions in the pathway metabolic intermediate biosynthesis; chorismate biosynthesis; chorismate from D-erythrose 4-phosphate and phosphoenolpyruvate: step 6/7. In terms of biological role, catalyzes the transfer of the enolpyruvyl moiety of phosphoenolpyruvate (PEP) to the 5-hydroxyl of shikimate-3-phosphate (S3P) to produce enolpyruvyl shikimate-3-phosphate and inorganic phosphate. The sequence is that of 3-phosphoshikimate 1-carboxyvinyltransferase from Aliivibrio salmonicida (strain LFI1238) (Vibrio salmonicida (strain LFI1238)).